A 149-amino-acid chain; its full sequence is Transthyretin (149 aa).

The first 20 residues, 1-20 (MAFHSLLLLCLAGLAFVSET), serve as a signal peptide directing secretion. The residue at position 32 (Cys-32) is a Sulfocysteine. Lys-37 contacts L-thyroxine. Glu-64 is modified (4-carboxyglutamate). L-thyroxine contacts are provided by Glu-76 and Ser-139.

The protein belongs to the transthyretin family. As to quaternary structure, homotetramer. Dimer of dimers. In the homotetramer, subunits assemble around a central channel that can accommodate two ligand molecules. Interacts with RBP4. In terms of processing, sulfonation of the reactive cysteine Cys-32 enhances the stability of the native conformation of TTR, avoiding misassembly of the protein leading to amyloid formation.

The protein localises to the secreted. Its function is as follows. Thyroid hormone-binding protein. Probably transports thyroxine from the bloodstream to the brain. The chain is Transthyretin (TTR) from Notamacropus eugenii (Tammar wallaby).